A 435-amino-acid chain; its full sequence is Gamma-glutamyl phosphate reductase (435 aa).

The protein belongs to the gamma-glutamyl phosphate reductase family.

The protein resides in the cytoplasm. The enzyme catalyses L-glutamate 5-semialdehyde + phosphate + NADP(+) = L-glutamyl 5-phosphate + NADPH + H(+). It participates in amino-acid biosynthesis; L-proline biosynthesis; L-glutamate 5-semialdehyde from L-glutamate: step 2/2. Catalyzes the NADPH-dependent reduction of L-glutamate 5-phosphate into L-glutamate 5-semialdehyde and phosphate. The product spontaneously undergoes cyclization to form 1-pyrroline-5-carboxylate. This chain is Gamma-glutamyl phosphate reductase, found in Nostoc punctiforme (strain ATCC 29133 / PCC 73102).